Consider the following 30-residue polypeptide: Cycloviolacin-O20 (30 aa).

A cross-link (cyclopeptide (Gly-Asp)) is located at residues 1–30 (GIPCGESCVWIPCLTSAIGCSCKSKVCYRD). 3 disulfides stabilise this stretch: Cys-4-Cys-20, Cys-8-Cys-22, and Cys-13-Cys-27.

Post-translationally, this is a cyclic peptide.

In terms of biological role, probably participates in a plant defense mechanism. This is Cycloviolacin-O20 from Viola odorata (Sweet violet).